The chain runs to 56 residues: Putative 2-Cys peroxiredoxin BAS1 (56 aa).

It belongs to the peroxiredoxin family. AhpC/Prx1 subfamily. Homodimer; disulfide-linked, upon oxidation.

It is found in the plastid. It localises to the chloroplast. It catalyses the reaction a hydroperoxide + [thioredoxin]-dithiol = an alcohol + [thioredoxin]-disulfide + H2O. Thiol-specific peroxidase that catalyzes the reduction of hydrogen peroxide and organic hydroperoxides to water and alcohols, respectively. Plays a role in cell protection against oxidative stress by detoxifying peroxides. May be an antioxidant enzyme particularly in the developing shoot and photosynthesizing leaf. This Pinus strobus (Eastern white pine) protein is Putative 2-Cys peroxiredoxin BAS1.